The primary structure comprises 129 residues: Transcription antitermination protein NusB (129 aa).

Belongs to the NusB family.

Its function is as follows. Involved in transcription antitermination. Required for transcription of ribosomal RNA (rRNA) genes. Binds specifically to the boxA antiterminator sequence of the ribosomal RNA (rrn) operons. The polypeptide is Transcription antitermination protein NusB (Staphylococcus aureus (strain MRSA252)).